Consider the following 807-residue polypeptide: SWI/SNF complex subunit SWI3C (807 aa).

The disordered stretch occupies residues 1–74 (MPASEDRRGK…DPGLGIGEVV (74 aa)). Over residues 28-54 (EEEDMEEEDEENNNNNNEEMDDVENAD) the composition is skewed to acidic residues. Residues 176–274 (HVLPMHSDWF…YCATAQSHPG (99 aa)) form the SWIRM domain. A ZZ-type; degenerate zinc finger spans residues 340 to 394 (LCDSHCNHCSRPLPTVYFQSQKKGDILLCCDCFHHGRFVVGHSCLDFVRVDPMKF). Zn(2+) contacts are provided by Cys345, Cys348, Cys368, and Cys371. Residues 398 to 449 (QDGDNWTDQETLLLLEAVELYNENWVQIADHVGSKSKAQCILHFLRLPVEDG) enclose the SANT domain. 2 stretches are compositionally biased toward polar residues: residues 458-467 (GVTNTENPTN) and 552-569 (ENQQ…NGAE). 2 disordered regions span residues 458–487 (GVTN…SEQG) and 549–571 (LDGE…AEAQ). Residues 598–656 (ADHEEREIQRLSANIVNHQLKRMELKLKQFAEIETLLMKECEQVEKTRQRFSAERARML) adopt a coiled-coil conformation. Composition is skewed to low complexity over residues 692–703 (QHQQQQASATSQ) and 726–739 (QQQQ…QQQQ). Disordered regions lie at residues 692–713 (QHQQ…FSNN), 721–740 (HFMA…QQQA), and 781–807 (SINQ…LGLN). Positions 798–807 (SGSGSGLGLN) are enriched in gly residues.

Heterodimer. Interacts with SWI3A, SWI3B and BRM, but not with BSH. Interacts with MORC6 and SUVH9. Expressed in roots, stems, leaves, flowers and siliques.

It is found in the nucleus. In terms of biological role, component of a multiprotein complex equivalent of the SWI/SNF complex, an ATP-dependent chromatin-remodeling complex, which is required for the positive and negative regulation of gene expression of a large number of genes. It changes chromatin structure by altering DNA-histone contacts within a nucleosome, leading eventually to a change in nucleosome position, thus facilitating or repressing binding of gene-specific transcription factors. The protein is SWI/SNF complex subunit SWI3C (SWI3C) of Arabidopsis thaliana (Mouse-ear cress).